A 465-amino-acid chain; its full sequence is Peptidoglycan glycosyltransferase RodA (465 aa).

13 helical membrane passes run 21–41, 50–70, 76–96, 115–135, 144–164, 179–199, 222–242, 243–263, 264–284, 308–328, 340–360, 382–402, and 414–434; these read AELL…AIVE, WYLA…HLAI, YTDP…LVMI, AQQM…MTVL, YGYI…PLPE, IQPA…VLVA, LAPL…EKDL, GTSL…TQRL, SWVI…YFTF, IVQS…LGNG, FIIA…LLML, LLAA…SGGV, and PWMS…AILA.

The protein belongs to the SEDS family.

It localises to the cell inner membrane. The enzyme catalyses [GlcNAc-(1-&gt;4)-Mur2Ac(oyl-L-Ala-gamma-D-Glu-L-Lys-D-Ala-D-Ala)](n)-di-trans,octa-cis-undecaprenyl diphosphate + beta-D-GlcNAc-(1-&gt;4)-Mur2Ac(oyl-L-Ala-gamma-D-Glu-L-Lys-D-Ala-D-Ala)-di-trans,octa-cis-undecaprenyl diphosphate = [GlcNAc-(1-&gt;4)-Mur2Ac(oyl-L-Ala-gamma-D-Glu-L-Lys-D-Ala-D-Ala)](n+1)-di-trans,octa-cis-undecaprenyl diphosphate + di-trans,octa-cis-undecaprenyl diphosphate + H(+). It participates in cell wall biogenesis; peptidoglycan biosynthesis. In terms of biological role, transglycosylase involved in peptidoglycan cell wall formation. Required for the regulation of cell length. This Mycobacterium leprae (strain TN) protein is Peptidoglycan glycosyltransferase RodA (rodA).